The primary structure comprises 671 residues: UvrABC system protein B (671 aa).

In terms of domain architecture, Helicase ATP-binding spans 35-423 (KAIIENKKHQ…NHQVVQQIIR (389 aa)). 48 to 55 (GATGTGKT) is a binding site for ATP. The short motif at 101–124 (NFDFFQPEAYIPSKDLYIDKDSRQ) is the Beta-hairpin element. One can recognise a Helicase C-terminal domain in the interval 440–602 (QIDDIINEIH…IVPKTISKAI (163 aa)). One can recognise a UVR domain in the interval 632-667 (QQTIDNLRQEMLQAAKELDFERAAILRDTIIELENE).

The protein belongs to the UvrB family. As to quaternary structure, forms a heterotetramer with UvrA during the search for lesions. Interacts with UvrC in an incision complex.

It is found in the cytoplasm. Its function is as follows. The UvrABC repair system catalyzes the recognition and processing of DNA lesions. A damage recognition complex composed of 2 UvrA and 2 UvrB subunits scans DNA for abnormalities. Upon binding of the UvrA(2)B(2) complex to a putative damaged site, the DNA wraps around one UvrB monomer. DNA wrap is dependent on ATP binding by UvrB and probably causes local melting of the DNA helix, facilitating insertion of UvrB beta-hairpin between the DNA strands. Then UvrB probes one DNA strand for the presence of a lesion. If a lesion is found the UvrA subunits dissociate and the UvrB-DNA preincision complex is formed. This complex is subsequently bound by UvrC and the second UvrB is released. If no lesion is found, the DNA wraps around the other UvrB subunit that will check the other stand for damage. The chain is UvrABC system protein B from Mycoplasma mycoides subsp. mycoides SC (strain CCUG 32753 / NCTC 10114 / PG1).